A 317-amino-acid polypeptide reads, in one-letter code: Transaldolase (317 aa).

K132 serves as the catalytic Schiff-base intermediate with substrate.

It belongs to the transaldolase family. Type 1 subfamily. As to quaternary structure, homodimer.

The protein resides in the cytoplasm. The catalysed reaction is D-sedoheptulose 7-phosphate + D-glyceraldehyde 3-phosphate = D-erythrose 4-phosphate + beta-D-fructose 6-phosphate. Its pathway is carbohydrate degradation; pentose phosphate pathway; D-glyceraldehyde 3-phosphate and beta-D-fructose 6-phosphate from D-ribose 5-phosphate and D-xylulose 5-phosphate (non-oxidative stage): step 2/3. Transaldolase is important for the balance of metabolites in the pentose-phosphate pathway. This chain is Transaldolase, found in Histophilus somni (strain 129Pt) (Haemophilus somnus).